The following is a 76-amino-acid chain: Putative membrane protein insertion efficiency factor (76 aa).

This sequence belongs to the UPF0161 family.

Its subcellular location is the cell inner membrane. Its function is as follows. Could be involved in insertion of integral membrane proteins into the membrane. This Porphyromonas gingivalis (strain ATCC 33277 / DSM 20709 / CIP 103683 / JCM 12257 / NCTC 11834 / 2561) protein is Putative membrane protein insertion efficiency factor.